The sequence spans 154 residues: Phosphopantetheine adenylyltransferase (154 aa).

Residue Thr-10 participates in substrate binding. Residues Thr-10 to Phe-11 and His-18 contribute to the ATP site. Residues Lys-42, Leu-74, and Arg-88 each coordinate substrate. Residues Gly-89–Arg-91, Glu-99, and Asn-124–Ser-130 contribute to the ATP site.

Belongs to the bacterial CoaD family. In terms of assembly, homohexamer. Mg(2+) is required as a cofactor.

The protein localises to the cytoplasm. The enzyme catalyses (R)-4'-phosphopantetheine + ATP + H(+) = 3'-dephospho-CoA + diphosphate. It functions in the pathway cofactor biosynthesis; coenzyme A biosynthesis; CoA from (R)-pantothenate: step 4/5. Its function is as follows. Reversibly transfers an adenylyl group from ATP to 4'-phosphopantetheine, yielding dephospho-CoA (dPCoA) and pyrophosphate. The chain is Phosphopantetheine adenylyltransferase from Nautilia profundicola (strain ATCC BAA-1463 / DSM 18972 / AmH).